Reading from the N-terminus, the 76-residue chain is Waprin-Rha1 (76 aa).

Positions 1-24 (MQARVFLLLLGVILLGMMGPMVSA) are cleaved as a signal peptide. The region spanning 25–75 (QDGKAGSCPDVNQPIPPLGVCKTTCATDSNCPDIQKCCKNGCGHMSCTRPS) is the WAP domain. 4 disulfides stabilise this stretch: cysteine 32–cysteine 62, cysteine 45–cysteine 66, cysteine 49–cysteine 61, and cysteine 55–cysteine 71.

The protein belongs to the venom waprin family. As to expression, expressed by the venom gland.

It is found in the secreted. Damages membranes of susceptible bacteria. Has no hemolytic activity. Not toxic to mice. Does not inhibit the proteinases elastase and cathepsin G. The chain is Waprin-Rha1 from Rhabdophis tigrinus tigrinus (Tiger keelback snake).